We begin with the raw amino-acid sequence, 410 residues long: Lissencephaly-1 homolog B (410 aa).

The LisH domain occupies 7–39 (QRDELNRAIADYLRSNGYEEAYSTFKKEAELDM). Positions 56 to 82 (TSVIRLQKKVMELESKLNEAKEEITLG) form a coiled coil. WD repeat units follow at residues 106–147 (GHRS…RTLK), 148–187 (GHTDSVQDISFDQTGKLLASCSADMTIKLWDFQGFECIRT), 190–229 (GHDHNVSSVAIMPNGDHIVSASRDKTIKMWEVATGYCVKT), 232–271 (GHREWVRMVRPNQDGSLIASCSNDQTVRVWVATSKECKAE), 274–333 (EHEH…CLMT), 336–375 (GHDNWVRGVLVHPGGRFIVSCADDKTLRIWDYKNKRCMKT), and 378–410 (AHEHFVTSLDMHQTAPYVVTGSVDQTVKVWECR).

Belongs to the WD repeat LIS1/nudF family. In terms of assembly, can self-associate. Component of the cytosolic PAF-AH (I) heterotetrameric enzyme, which is composed of PAFAH1B1 (beta), PAFAH1B2 (alpha2) and PAFAH1B3 (alpha1) subunits. The catalytic activity of the enzyme resides in the alpha1 (PAFAH1B3) and alpha2 (PAFAH1B2) subunits, whereas the beta subunit (PAFAH1B1) has regulatory activity. Trimer formation is not essential for the catalytic activity. Interacts with dynein, dynactin, nde1 and ndel1.

The protein resides in the cytoplasm. The protein localises to the cytoskeleton. It localises to the microtubule organizing center. It is found in the centrosome. Functionally, regulatory subunit (beta subunit) of the cytosolic type I platelet-activating factor (PAF) acetylhydrolase (PAF-AH (I)), an enzyme that catalyzes the hydrolyze of the acetyl group at the sn-2 position of PAF and its analogs and participates in PAF inactivation. Regulates the PAF-AH (I) activity in a catalytic dimer composition-dependent manner. Positively regulates the activity of the minus-end directed microtubule motor protein dynein. May enhance dynein-mediated microtubule sliding by targeting dynein to the microtubule plus end. Required for several dynein- and microtubule-dependent processes such as the maintenance of Golgi integrity, the peripheral transport of microtubule fragments and the coupling of the nucleus and centrosome. May be required for proliferation of neuronal precursors and neuronal migration. The protein is Lissencephaly-1 homolog B (pafah1b1-2) of Salmo salar (Atlantic salmon).